The sequence spans 67 residues: Non-specific lipid-transfer protein 2 (67 aa).

4 disulfide bridges follow: cysteine 3/cysteine 35, cysteine 11/cysteine 25, cysteine 26/cysteine 61, and cysteine 37/cysteine 67.

This sequence belongs to the plant LTP family. In terms of assembly, monomer. Disulfide bonds.

Its function is as follows. Plant non-specific lipid-transfer proteins transfer phospholipids as well as galactolipids across membranes. May play a role in wax or cutin deposition in the cell walls of expanding epidermal cells and certain secretory tissues. The polypeptide is Non-specific lipid-transfer protein 2 (Apium graveolens var. rapaceum (Celeriac)).